The chain runs to 394 residues: S-adenosylmethionine synthase 2 (394 aa).

A Mg(2+)-binding site is contributed by glutamate 11. ATP is bound at residue histidine 17. Glutamate 45 is a K(+) binding site. L-methionine is bound by residues glutamate 58 and glutamine 101. Residues 169–171 (DGK), 237–240 (SGRF), aspartate 248, 254–255 (RK), alanine 271, lysine 275, and lysine 279 contribute to the ATP site. Aspartate 248 is an L-methionine binding site. Lysine 279 contacts L-methionine.

This sequence belongs to the AdoMet synthase family. Homotetramer. Mn(2+) is required as a cofactor. Requires Mg(2+) as cofactor. It depends on Co(2+) as a cofactor. The cofactor is K(+).

It localises to the cytoplasm. The catalysed reaction is L-methionine + ATP + H2O = S-adenosyl-L-methionine + phosphate + diphosphate. It functions in the pathway amino-acid biosynthesis; S-adenosyl-L-methionine biosynthesis; S-adenosyl-L-methionine from L-methionine: step 1/1. Catalyzes the formation of S-adenosylmethionine from methionine and ATP. The reaction comprises two steps that are both catalyzed by the same enzyme: formation of S-adenosylmethionine (AdoMet) and triphosphate, and subsequent hydrolysis of the triphosphate. The chain is S-adenosylmethionine synthase 2 (SAM2) from Hordeum vulgare (Barley).